The primary structure comprises 310 residues: Membrane protein insertase YidC 2 (310 aa).

The signal sequence occupies residues 1–23; the sequence is MKKIYKRLLFSGLALSMLFFLSG. The N-palmitoyl cysteine moiety is linked to residue C24. The S-diacylglycerol cysteine moiety is linked to residue C24. 5 helical membrane-spanning segments follow: residues 34–54, 57–77, 136–156, 180–200, and 220–240; these read GEGW…QYLA, LGLG…LLIL, FGGL…ALYI, IITV…TLSV, and VMIS…SGIF. Residues 263–310 are disordered; that stretch reads EFKKNPPKPFKSNARKDITPQANNDKKLITSKKQKSNRNAGKQRHHKQ. Residues 276–290 are compositionally biased toward basic and acidic residues; that stretch reads ARKDITPQANNDKKL. Residues 291 to 310 show a composition bias toward basic residues; sequence ITSKKQKSNRNAGKQRHHKQ.

This sequence belongs to the OXA1/ALB3/YidC family. Type 2 subfamily.

It localises to the cell membrane. Functionally, required for the insertion and/or proper folding and/or complex formation of integral membrane proteins into the membrane. Involved in integration of membrane proteins that insert both dependently and independently of the Sec translocase complex, as well as at least some lipoproteins. Partially complements an E.coli yidC depletion experiment. In Streptococcus mutans serotype c (strain ATCC 700610 / UA159), this protein is Membrane protein insertase YidC 2 (yidC2).